The primary structure comprises 658 residues: Structure-specific endonuclease subunit SLX4 (658 aa).

3 disordered regions span residues 17–37 (VDSDSPMQEQDELPMTQIPGD), 74–123 (GATE…KSIT), and 327–383 (QPGV…QVLQ). 2 stretches are compositionally biased toward low complexity: residues 75–90 (ATESAPPSRAATPPAK) and 99–108 (KAAGRTSTGT). A compositionally biased stretch (polar residues) spans 365-374 (FPKSPTSTPE).

This sequence belongs to the SLX4 family. As to quaternary structure, forms a heterodimer with SLX1. Post-translationally, phosphorylated in response to DNA damage.

The protein resides in the nucleus. Regulatory subunit of the SLX1-SLX4 structure-specific endonuclease that resolves DNA secondary structures generated during DNA repair and recombination. Has endonuclease activity towards branched DNA substrates, introducing single-strand cuts in duplex DNA close to junctions with ss-DNA. The sequence is that of Structure-specific endonuclease subunit SLX4 from Lachancea thermotolerans (strain ATCC 56472 / CBS 6340 / NRRL Y-8284) (Yeast).